The sequence spans 297 residues: MLWELYVFVFAASVFLNFVGIIANLFIIVIIIKTWVNSRRIASPDRILFSLAITRFLTLGLFLLNSVYIATNTGRSVYFSTFFLLCWKFLDANSLWLVTILNSLYCVKITNFQHPVFLLLKRTISMKTTSLLLACLLISALTTLLYYMLSQISRFPEHIIGRNDTSFDLSDGILTLVASLVLNSLLQFMLNVTFASLLIHSLRRHIQKMQRNRTSFWNPQTEAHMGAMRLMICFLVLYIPYSIATLLYLPSYMRKNLRAQAICMIITAAYPPGHSVLLIITHHKLKAKAKKIFCFYK.

Topologically, residues 1 to 11 are extracellular; that stretch reads MLWELYVFVFA. Residues 12–32 form a helical membrane-spanning segment; sequence ASVFLNFVGIIANLFIIVIII. At 33–46 the chain is on the cytoplasmic side; that stretch reads KTWVNSRRIASPDR. Residues 47 to 67 form a helical membrane-spanning segment; the sequence is ILFSLAITRFLTLGLFLLNSV. Residues 68 to 80 are Extracellular-facing; the sequence is YIATNTGRSVYFS. A helical membrane pass occupies residues 81 to 101; the sequence is TFFLLCWKFLDANSLWLVTIL. Over 102–128 the chain is Cytoplasmic; sequence NSLYCVKITNFQHPVFLLLKRTISMKT. The chain crosses the membrane as a helical span at residues 129-149; the sequence is TSLLLACLLISALTTLLYYML. Over 150-171 the chain is Extracellular; sequence SQISRFPEHIIGRNDTSFDLSD. An N-linked (GlcNAc...) asparagine glycan is attached at asparagine 163. Residues 172–192 form a helical membrane-spanning segment; that stretch reads GILTLVASLVLNSLLQFMLNV. Topologically, residues 193–229 are cytoplasmic; the sequence is TFASLLIHSLRRHIQKMQRNRTSFWNPQTEAHMGAMR. A helical membrane pass occupies residues 230 to 250; the sequence is LMICFLVLYIPYSIATLLYLP. The Extracellular segment spans residues 251-260; that stretch reads SYMRKNLRAQ. Residues 261–281 traverse the membrane as a helical segment; that stretch reads AICMIITAAYPPGHSVLLIIT. Residues 282–297 lie on the Cytoplasmic side of the membrane; it reads HHKLKAKAKKIFCFYK.

It belongs to the G-protein coupled receptor T2R family. Expressed in subsets of taste receptor cells of the tongue and palate epithelium and exclusively in gustducin-positive cells. Expressed in 15% taste bud cells in circumvallate and foliate papillae but only in 2% in fungiform papillae.

Its subcellular location is the membrane. The protein localises to the cell projection. It is found in the cilium membrane. Functionally, gustducin-coupled receptor for denatonium and N(6)-propyl-2-thiouracil implicated in the perception of bitter compounds in the oral cavity and the gastrointestinal tract. Signals through PLCB2 and the calcium-regulated cation channel TRPM5. In airway epithelial cells, binding of denatonium increases the intracellular calcium ion concentration and stimulates ciliary beat frequency. The sequence is that of Taste receptor type 2 member 4 (Tas2r4) from Mus musculus (Mouse).